A 337-amino-acid polypeptide reads, in one-letter code: MASWNHKHIIDLAAFSLEDYQNVLELANRFKALPKSGARKLPALQGRFIAILFFEPSTRTRTSFEIAAKRLSADVQTFSASTSSLTKGETPLDTALTYVAMGADTLVIRHSSSGVPEQIAKSLEKAGKKTAILNGGDGLHSHPSQALLDLFTLVNFFEPSKPDIKSIKGKRIAIVGDILHSRVARSNLWSLTGCGADVILCGPKSLLPNDFVDFVSSPPPGQLIDPIKNRGKVMISRSLKETLQQSDAVITLRLQKERMNQNLLTNLGSYHREYGISRRILQNFRKEIPVLHPGPVNRGIEISSELLDDQSICLTQEQVKNGIPIRMALLYLLMASK.

2 residues coordinate carbamoyl phosphate: Arg-59 and Thr-60. Lys-87 contacts L-aspartate. Carbamoyl phosphate is bound by residues Arg-109, His-142, and Gln-145. Residues Arg-182 and Arg-253 each coordinate L-aspartate. Carbamoyl phosphate-binding residues include Gly-294 and Pro-295.

This sequence belongs to the aspartate/ornithine carbamoyltransferase superfamily. ATCase family. Heterododecamer (2C3:3R2) of six catalytic PyrB chains organized as two trimers (C3), and six regulatory PyrI chains organized as three dimers (R2).

The catalysed reaction is carbamoyl phosphate + L-aspartate = N-carbamoyl-L-aspartate + phosphate + H(+). It participates in pyrimidine metabolism; UMP biosynthesis via de novo pathway; (S)-dihydroorotate from bicarbonate: step 2/3. Catalyzes the condensation of carbamoyl phosphate and aspartate to form carbamoyl aspartate and inorganic phosphate, the committed step in the de novo pyrimidine nucleotide biosynthesis pathway. The chain is Aspartate carbamoyltransferase catalytic subunit from Prochlorococcus marinus (strain MIT 9211).